Consider the following 276-residue polypeptide: Small ribosomal subunit protein uS2 (276 aa).

The residue at position 2 (Ser-2) is an N-acetylserine.

It belongs to the universal ribosomal protein uS2 family. Component of the small ribosomal subunit. Mature ribosomes consist of a small (40S) and a large (60S) subunit. The 40S subunit contains about 33 different proteins and 1 molecule of RNA (18S). The 60S subunit contains about 49 different proteins and 3 molecules of RNA (28S, 5.8S and 5S). Interacts with rps-21.

It localises to the cytoplasm. Required for the assembly and/or stability of the 40S ribosomal subunit. Required for the processing of the 20S rRNA-precursor to mature 18S rRNA in a late step of the maturation of 40S ribosomal subunits. Involved in cold-warm shock-induced translocation of the RNA exosome components from the nucleolus to nucleoplasm. The sequence is that of Small ribosomal subunit protein uS2 from Caenorhabditis elegans.